Here is a 76-residue protein sequence, read N- to C-terminus: ATP synthase subunit c (76 aa).

2 helical membrane passes run 12 to 32 (LGSIGYGLAAIGPGVGVGIIF) and 54 to 74 (ILGFAFCEALALIGLVMPFVY).

Belongs to the ATPase C chain family. F-type ATPases have 2 components, F(1) - the catalytic core - and F(0) - the membrane proton channel. F(1) has five subunits: alpha(3), beta(3), gamma(1), delta(1), epsilon(1). F(0) has three main subunits: a(1), b(2) and c(10-14). The alpha and beta chains form an alternating ring which encloses part of the gamma chain. F(1) is attached to F(0) by a central stalk formed by the gamma and epsilon chains, while a peripheral stalk is formed by the delta and b chains.

It localises to the cell membrane. Functionally, f(1)F(0) ATP synthase produces ATP from ADP in the presence of a proton or sodium gradient. F-type ATPases consist of two structural domains, F(1) containing the extramembraneous catalytic core and F(0) containing the membrane proton channel, linked together by a central stalk and a peripheral stalk. During catalysis, ATP synthesis in the catalytic domain of F(1) is coupled via a rotary mechanism of the central stalk subunits to proton translocation. Key component of the F(0) channel; it plays a direct role in translocation across the membrane. A homomeric c-ring of between 10-14 subunits forms the central stalk rotor element with the F(1) delta and epsilon subunits. This is ATP synthase subunit c from Streptomyces coelicolor (strain ATCC BAA-471 / A3(2) / M145).